Here is a 94-residue protein sequence, read N- to C-terminus: Small ribosomal subunit protein bS6 (94 aa).

Belongs to the bacterial ribosomal protein bS6 family.

Functionally, binds together with bS18 to 16S ribosomal RNA. The sequence is that of Small ribosomal subunit protein bS6 from Alkaliphilus oremlandii (strain OhILAs) (Clostridium oremlandii (strain OhILAs)).